The primary structure comprises 122 residues: Small ribosomal subunit protein uS13 (122 aa).

The disordered stretch occupies residues 98–122 (VRGQRTHTNARTRKGPAKAIAGKKK).

The protein belongs to the universal ribosomal protein uS13 family. Part of the 30S ribosomal subunit. Forms a loose heterodimer with protein S19. Forms two bridges to the 50S subunit in the 70S ribosome.

Located at the top of the head of the 30S subunit, it contacts several helices of the 16S rRNA. In the 70S ribosome it contacts the 23S rRNA (bridge B1a) and protein L5 of the 50S subunit (bridge B1b), connecting the 2 subunits; these bridges are implicated in subunit movement. Contacts the tRNAs in the A and P-sites. This Ruegeria sp. (strain TM1040) (Silicibacter sp.) protein is Small ribosomal subunit protein uS13.